We begin with the raw amino-acid sequence, 444 residues long: ATP-dependent protease ATPase subunit HslU (444 aa).

ATP contacts are provided by residues isoleucine 20, 62-67 (GVGKTE), aspartate 257, glutamate 322, and arginine 394.

Belongs to the ClpX chaperone family. HslU subfamily. In terms of assembly, a double ring-shaped homohexamer of HslV is capped on each side by a ring-shaped HslU homohexamer. The assembly of the HslU/HslV complex is dependent on binding of ATP.

The protein resides in the cytoplasm. ATPase subunit of a proteasome-like degradation complex; this subunit has chaperone activity. The binding of ATP and its subsequent hydrolysis by HslU are essential for unfolding of protein substrates subsequently hydrolyzed by HslV. HslU recognizes the N-terminal part of its protein substrates and unfolds these before they are guided to HslV for hydrolysis. The sequence is that of ATP-dependent protease ATPase subunit HslU from Bordetella avium (strain 197N).